The chain runs to 256 residues: 3-hydroxy-5-phosphonooxypentane-2,4-dione thiolase (256 aa).

The active-site Schiff-base intermediate with substrate is K168.

Belongs to the DeoC/FbaB aldolase family. Homodecamer.

The protein localises to the cytoplasm. The catalysed reaction is dihydroxyacetone phosphate + acetyl-CoA = 3-hydroxy-2,4-dioxopentyl phosphate + CoA. Its function is as follows. Involved in the degradation of phospho-AI-2, thereby terminating induction of the lsr operon and closing the AI-2 signaling cycle. Catalyzes the transfer of an acetyl moiety from 3-hydroxy-5-phosphonooxypentane-2,4-dione to CoA to form glycerone phosphate and acetyl-CoA. In Shigella flexneri serotype 5b (strain 8401), this protein is 3-hydroxy-5-phosphonooxypentane-2,4-dione thiolase (lsrF).